The following is a 434-amino-acid chain: Ribonuclease T2-like (434 aa).

Residues M1 to G18 form the signal peptide. 5 disulfides stabilise this stretch: C27/C46, C35/C94, C45/C171, C102/C163, and C241/C277. N-linked (GlcNAc...) asparagine glycosylation is found at N37 and N70. Residue H87 is part of the active site. 2 N-linked (GlcNAc...) asparagine glycosylation sites follow: N103 and N123. Catalysis depends on residues E156 and H160.

Belongs to the RNase T2 family. Post-translationally, N-glycosylated.

Its subcellular location is the vacuole lumen. The protein localises to the cytoplasm. The catalysed reaction is a ribonucleotidyl-ribonucleotide-RNA + H2O = a 3'-end 3'-phospho-ribonucleotide-RNA + a 5'-end dephospho-ribonucleoside-RNA + H(+). In terms of biological role, rnase which modulates cell survival under stress conditions. Released from the vacuole to the cytoplasm during stress to promote tRNA and rRNA cleavage and to activate separately a downstream pathway that promotes cell death. Involved in cell size, vacuolar morphology and growth at high temperatures and high salt concentration. This chain is Ribonuclease T2-like (RNY1), found in Saccharomyces cerevisiae (strain ATCC 204508 / S288c) (Baker's yeast).